Here is a 225-residue protein sequence, read N- to C-terminus: Imidazole glycerol phosphate synthase subunit HisH (225 aa).

The Glutamine amidotransferase type-1 domain maps to 5–220 (KNVIVDTGCA…LELDSTELNQ (216 aa)). The Nucleophile role is filled by Cys80. Active-site residues include His195 and Glu197.

As to quaternary structure, heterodimer of HisH and HisF.

The protein resides in the cytoplasm. The catalysed reaction is 5-[(5-phospho-1-deoxy-D-ribulos-1-ylimino)methylamino]-1-(5-phospho-beta-D-ribosyl)imidazole-4-carboxamide + L-glutamine = D-erythro-1-(imidazol-4-yl)glycerol 3-phosphate + 5-amino-1-(5-phospho-beta-D-ribosyl)imidazole-4-carboxamide + L-glutamate + H(+). It catalyses the reaction L-glutamine + H2O = L-glutamate + NH4(+). It functions in the pathway amino-acid biosynthesis; L-histidine biosynthesis; L-histidine from 5-phospho-alpha-D-ribose 1-diphosphate: step 5/9. Its function is as follows. IGPS catalyzes the conversion of PRFAR and glutamine to IGP, AICAR and glutamate. The HisH subunit catalyzes the hydrolysis of glutamine to glutamate and ammonia as part of the synthesis of IGP and AICAR. The resulting ammonia molecule is channeled to the active site of HisF. This chain is Imidazole glycerol phosphate synthase subunit HisH, found in Colwellia psychrerythraea (strain 34H / ATCC BAA-681) (Vibrio psychroerythus).